Consider the following 373-residue polypeptide: Glutamine synthetase (373 aa).

N-acetylalanine is present on alanine 2. A required for glutamine-induced ubiquitination by CRL4(CRBN) and proteasomal degradation region spans residues alanine 2 to lysine 25. An N6-acetyllysine mark is found at lysine 11 and lysine 14. In terms of domain architecture, GS beta-grasp spans glutamate 24–arginine 106. At tyrosine 104 the chain carries Phosphotyrosine. The region spanning leucine 113–asparagine 373 is the GS catalytic domain. Glutamate 134 contacts ATP. Mn(2+) is bound by residues glutamate 134, glutamate 136, glutamate 196, and glutamate 203. Residue glutamate 203 to proline 208 participates in ATP binding. Residue asparagine 246–tryptophan 247 participates in L-glutamate binding. Position 253 (histidine 253) interacts with Mn(2+). Residues asparagine 255 to serine 257, arginine 319, and arginine 324 each bind ATP. Arginine 319 contributes to the L-glutamate binding site. Tyrosine 336–glutamate 338 is a binding site for ADP. Position 338 (glutamate 338) interacts with Mn(2+). Arginine 340 lines the L-glutamate pocket. The residue at position 343 (serine 343) is a Phosphoserine.

Belongs to the glutamine synthetase family. Decamer; composed of two pentamers. Interacts with PALMD. Interacts with RHOJ. Interacts with BEST2; this interaction tethers a fraction of GLUL to the membrane, causing a decrease of cytosolic glutamine synthase (GS) activity and inhibits the chloride channel activity of BEST2 by affecting the gating at the aperture in the absence of intracellular glutamate. Mg(2+) is required as a cofactor. Requires Mn(2+) as cofactor. Palmitoylated; undergoes autopalmitoylation. In terms of processing, acetylated by EP300/p300; acetylation is stimulated by increased glutamine levels and promotes ubiquitin-mediated proteasomal degradation. Post-translationally, ubiquitinated by ZNRF1. Ubiquitinated by the DCX (DDB1-CUL4-X-box) E3 ubiquitin-protein ligase complex called CRL4(CRBN), leading to proteasomal degradation.

The protein resides in the cytoplasm. The protein localises to the cytosol. It is found in the microsome. Its subcellular location is the mitochondrion. It localises to the cell membrane. The enzyme catalyses L-glutamate + NH4(+) + ATP = L-glutamine + ADP + phosphate + H(+). The catalysed reaction is L-cysteinyl-[protein] + hexadecanoyl-CoA = S-hexadecanoyl-L-cysteinyl-[protein] + CoA. With respect to regulation, glutamine synthetase activity is inhibited by methionine sulfoximine (MSO). Its function is as follows. Glutamine synthetase that catalyzes the ATP-dependent conversion of glutamate and ammonia to glutamine. Its role depends on tissue localization: in the brain, it regulates the levels of toxic ammonia and converts neurotoxic glutamate to harmless glutamine, whereas in the liver, it is one of the enzymes responsible for the removal of ammonia. Plays a key role in ammonium detoxification during erythropoiesis: the glutamine synthetase activity is required to remove ammonium generated by porphobilinogen deaminase (HMBS) during heme biosynthesis to prevent ammonium accumulation and oxidative stress. Essential for proliferation of fetal skin fibroblasts. Independently of its glutamine synthetase activity, required for endothelial cell migration during vascular development. Involved in angiogenesis by regulating membrane localization and activation of the GTPase RHOJ, possibly by promoting RHOJ palmitoylation. May act as a palmitoyltransferase for RHOJ: able to autopalmitoylate and then transfer the palmitoyl group to RHOJ. Plays a role in ribosomal 40S subunit biogenesis. Through the interaction with BEST2, inhibits BEST2 channel activity by affecting the gating at the aperture in the absence of intracellular L-glutamate, but sensitizes BEST2 to intracellular L-glutamate, which promotes the opening of BEST2 and thus relieves its inhibitory effect on BEST2. This chain is Glutamine synthetase, found in Sus scrofa (Pig).